The chain runs to 427 residues: MNFYVDVLGCPKNEADCALLKAYLEKKGNNIVNTIEDADAVVIDTCGFILEAKKESIEEILTYLELKKERDLKVYVTGCLVQRYGEELKKEIPEVDGWFGILPPEKIAENIGKESIIPKNPEPVYEFGGRVDEKQYAYVKISDGCDRACSFCTIPLFKGSFKSRKIDDIVKEVEYLILSGKKEIILVAQDTTGYGIDLYGKQMLPELLKRINDIPGDFWIRVMYMHPDHITDEIIEAFSYDKVLKYFDIPVQHGSDKVLKLMNRTKKSEHILKLVEKIRKRYEDAVLRTSIIVGFPGETDEDFEELLDFIKMVRFERLGAFIYSDEEEAPSYHFEGKVPEIVAQERLDILMEEQSKISFEINEKMVGKTFKVLFDEEEEGVLIARSYMDAPEIDGNIFVPGKFEEGFFKVKVTSADVYDLEGKIVEE.

In terms of domain architecture, MTTase N-terminal spans 1–116 (MNFYVDVLGC…IAENIGKESI (116 aa)). [4Fe-4S] cluster contacts are provided by Cys-10, Cys-46, Cys-79, Cys-145, Cys-149, and Cys-152. The Radical SAM core domain occupies 131–360 (VDEKQYAYVK…MEEQSKISFE (230 aa)). Residues 363–426 (EKMVGKTFKV…VYDLEGKIVE (64 aa)) enclose the TRAM domain.

Belongs to the methylthiotransferase family. RimO subfamily. The cofactor is [4Fe-4S] cluster.

It is found in the cytoplasm. It catalyses the reaction L-aspartate(89)-[ribosomal protein uS12]-hydrogen + (sulfur carrier)-SH + AH2 + 2 S-adenosyl-L-methionine = 3-methylsulfanyl-L-aspartate(89)-[ribosomal protein uS12]-hydrogen + (sulfur carrier)-H + 5'-deoxyadenosine + L-methionine + A + S-adenosyl-L-homocysteine + 2 H(+). Its function is as follows. Catalyzes the methylthiolation of an aspartic acid residue of ribosomal protein uS12. The sequence is that of Ribosomal protein uS12 methylthiotransferase RimO from Thermosipho africanus (strain TCF52B).